A 121-amino-acid polypeptide reads, in one-letter code: Large ribosomal subunit protein uL14c (121 aa).

This sequence belongs to the universal ribosomal protein uL14 family. In terms of assembly, part of the 50S ribosomal subunit.

It localises to the plastid. It is found in the chloroplast. Its function is as follows. Binds to 23S rRNA. The polypeptide is Large ribosomal subunit protein uL14c (Nephroselmis olivacea (Green alga)).